Here is a 141-residue protein sequence, read N- to C-terminus: Large ribosomal subunit protein uL11 (141 aa).

This sequence belongs to the universal ribosomal protein uL11 family. As to quaternary structure, part of the ribosomal stalk of the 50S ribosomal subunit. Interacts with L10 and the large rRNA to form the base of the stalk. L10 forms an elongated spine to which L12 dimers bind in a sequential fashion forming a multimeric L10(L12)X complex. Post-translationally, one or more lysine residues are methylated.

In terms of biological role, forms part of the ribosomal stalk which helps the ribosome interact with GTP-bound translation factors. The polypeptide is Large ribosomal subunit protein uL11 (Prochlorococcus marinus (strain NATL1A)).